A 145-amino-acid polypeptide reads, in one-letter code: Bacilliredoxin BLi02578/BL01507 (145 aa).

It belongs to the bacilliredoxin family.

This chain is Bacilliredoxin BLi02578/BL01507, found in Bacillus licheniformis (strain ATCC 14580 / DSM 13 / JCM 2505 / CCUG 7422 / NBRC 12200 / NCIMB 9375 / NCTC 10341 / NRRL NRS-1264 / Gibson 46).